A 426-amino-acid polypeptide reads, in one-letter code: Dihydroorotase (426 aa).

Positions 59 and 61 each coordinate Zn(2+). Substrate-binding positions include 61 to 63 (HLR) and asparagine 93. Positions 151, 178, and 232 each coordinate Zn(2+). Substrate is bound at residue asparagine 279. Aspartate 306 is a binding site for Zn(2+). Aspartate 306 is a catalytic residue. Substrate-binding positions include histidine 310 and 324–325 (FG).

This sequence belongs to the metallo-dependent hydrolases superfamily. DHOase family. Class I DHOase subfamily. The cofactor is Zn(2+).

The enzyme catalyses (S)-dihydroorotate + H2O = N-carbamoyl-L-aspartate + H(+). The protein operates within pyrimidine metabolism; UMP biosynthesis via de novo pathway; (S)-dihydroorotate from bicarbonate: step 3/3. In terms of biological role, catalyzes the reversible cyclization of carbamoyl aspartate to dihydroorotate. This is Dihydroorotase from Brevibacillus brevis (strain 47 / JCM 6285 / NBRC 100599).